A 569-amino-acid polypeptide reads, in one-letter code: AA9 family lytic polysaccharide monooxygenase A (569 aa).

An N-terminal signal peptide occupies residues 1–16 (MRIFSLALGFLPLVAG). The Cu(2+) site is built by histidine 17 and histidine 99. A disulfide bridge links cysteine 59 with cysteine 189. An N-linked (GlcNAc...) asparagine glycan is attached at asparagine 112. O2 is bound by residues histidine 174 and glutamine 184. Tyrosine 186 contributes to the Cu(2+) binding site. Asparagine 244 and asparagine 381 each carry an N-linked (GlcNAc...) asparagine glycan. The segment covering 399 to 424 (AADATATATATTEDAEATTAAEAAAT) has biased composition (low complexity). The disordered stretch occupies residues 399-439 (AADATATATATTEDAEATTAAEAAATSGAGRPGRGHGHGRG). An N-linked (GlcNAc...) asparagine glycan is attached at asparagine 472.

The protein belongs to the polysaccharide monooxygenase AA9 family. Cu(2+) serves as cofactor.

It localises to the secreted. It carries out the reaction [(1-&gt;4)-beta-D-glucosyl]n+m + reduced acceptor + O2 = 4-dehydro-beta-D-glucosyl-[(1-&gt;4)-beta-D-glucosyl]n-1 + [(1-&gt;4)-beta-D-glucosyl]m + acceptor + H2O.. Functionally, lytic polysaccharide monooxygenase (LPMO) that depolymerizes crystalline and amorphous polysaccharides via the oxidation of scissile alpha- or beta-(1-4)-glycosidic bonds, yielding C4 oxidation products. Catalysis by LPMOs requires the reduction of the active-site copper from Cu(II) to Cu(I) by a reducing agent and H(2)O(2) or O(2) as a cosubstrate. The protein is AA9 family lytic polysaccharide monooxygenase A of Emericella nidulans (strain FGSC A4 / ATCC 38163 / CBS 112.46 / NRRL 194 / M139) (Aspergillus nidulans).